Reading from the N-terminus, the 149-residue chain is 3-dehydroquinate dehydratase (149 aa).

The active-site Proton acceptor is the tyrosine 23. Residues asparagine 75, histidine 81, and aspartate 88 each coordinate substrate. The active-site Proton donor is the histidine 101. Substrate contacts are provided by residues 102–103 (LS) and arginine 112.

It belongs to the type-II 3-dehydroquinase family. In terms of assembly, homododecamer.

It catalyses the reaction 3-dehydroquinate = 3-dehydroshikimate + H2O. It functions in the pathway metabolic intermediate biosynthesis; chorismate biosynthesis; chorismate from D-erythrose 4-phosphate and phosphoenolpyruvate: step 3/7. Functionally, catalyzes a trans-dehydration via an enolate intermediate. The protein is 3-dehydroquinate dehydratase of Stenotrophomonas maltophilia (strain R551-3).